Here is a 400-residue protein sequence, read N- to C-terminus: Tyrosine--tRNA ligase 2 (400 aa).

Positions 46-55 (PSAPDIHLGH) match the 'HIGH' region motif. The short motif at 230–234 (KMSKS) is the 'KMSKS' region element. Residue Lys-233 coordinates ATP. The 61-residue stretch at 339-399 (NNLIEAIVKI…GKKKIVKLLV (61 aa)) folds into the S4 RNA-binding domain.

This sequence belongs to the class-I aminoacyl-tRNA synthetase family. TyrS type 2 subfamily. In terms of assembly, homodimer.

It localises to the cytoplasm. It catalyses the reaction tRNA(Tyr) + L-tyrosine + ATP = L-tyrosyl-tRNA(Tyr) + AMP + diphosphate + H(+). Functionally, catalyzes the attachment of tyrosine to tRNA(Tyr) in a two-step reaction: tyrosine is first activated by ATP to form Tyr-AMP and then transferred to the acceptor end of tRNA(Tyr). The chain is Tyrosine--tRNA ligase 2 from Clostridium acetobutylicum (strain ATCC 824 / DSM 792 / JCM 1419 / IAM 19013 / LMG 5710 / NBRC 13948 / NRRL B-527 / VKM B-1787 / 2291 / W).